Here is an 874-residue protein sequence, read N- to C-terminus: Alanine--tRNA ligase (874 aa).

His564, His568, Cys665, and His669 together coordinate Zn(2+).

It belongs to the class-II aminoacyl-tRNA synthetase family. The cofactor is Zn(2+).

The protein localises to the cytoplasm. It catalyses the reaction tRNA(Ala) + L-alanine + ATP = L-alanyl-tRNA(Ala) + AMP + diphosphate. In terms of biological role, catalyzes the attachment of alanine to tRNA(Ala) in a two-step reaction: alanine is first activated by ATP to form Ala-AMP and then transferred to the acceptor end of tRNA(Ala). Also edits incorrectly charged Ser-tRNA(Ala) and Gly-tRNA(Ala) via its editing domain. In Burkholderia mallei (strain ATCC 23344), this protein is Alanine--tRNA ligase.